The sequence spans 249 residues: Probable transcriptional regulatory protein HY04AAS1_0501 (249 aa).

It belongs to the TACO1 family.

The protein localises to the cytoplasm. The protein is Probable transcriptional regulatory protein HY04AAS1_0501 of Hydrogenobaculum sp. (strain Y04AAS1).